The following is a 357-amino-acid chain: Sulfate/thiosulfate import ATP-binding protein CysA (357 aa).

The ABC transporter domain occupies 3–237; that stretch reads ITIQNLNKHF…PENAFVTEFL (235 aa). Position 35–42 (35–42) interacts with ATP; that stretch reads GPSGCGKT.

It belongs to the ABC transporter superfamily. Sulfate/tungstate importer (TC 3.A.1.6) family. In terms of assembly, the complex is composed of two ATP-binding proteins (CysA), two transmembrane proteins (CysT and CysW) and a solute-binding protein (CysP).

Its subcellular location is the cell inner membrane. It carries out the reaction sulfate(out) + ATP + H2O = sulfate(in) + ADP + phosphate + H(+). The catalysed reaction is thiosulfate(out) + ATP + H2O = thiosulfate(in) + ADP + phosphate + H(+). Part of the ABC transporter complex CysAWTP involved in sulfate/thiosulfate import. Responsible for energy coupling to the transport system. The chain is Sulfate/thiosulfate import ATP-binding protein CysA from Neisseria meningitidis serogroup A / serotype 4A (strain DSM 15465 / Z2491).